Here is a 211-residue protein sequence, read N- to C-terminus: ATP phosphoribosyltransferase (211 aa).

This sequence belongs to the ATP phosphoribosyltransferase family. Short subfamily. In terms of assembly, heteromultimer composed of HisG and HisZ subunits.

The protein resides in the cytoplasm. It carries out the reaction 1-(5-phospho-beta-D-ribosyl)-ATP + diphosphate = 5-phospho-alpha-D-ribose 1-diphosphate + ATP. The protein operates within amino-acid biosynthesis; L-histidine biosynthesis; L-histidine from 5-phospho-alpha-D-ribose 1-diphosphate: step 1/9. Functionally, catalyzes the condensation of ATP and 5-phosphoribose 1-diphosphate to form N'-(5'-phosphoribosyl)-ATP (PR-ATP). Has a crucial role in the pathway because the rate of histidine biosynthesis seems to be controlled primarily by regulation of HisG enzymatic activity. The chain is ATP phosphoribosyltransferase from Ectopseudomonas mendocina (strain ymp) (Pseudomonas mendocina).